We begin with the raw amino-acid sequence, 761 residues long: Semaphorin-3D (761 aa).

An N-terminal signal peptide occupies residues methionine 1–glycine 24. A Sema domain is found at arginine 32–leucine 519. An intrachain disulfide couples cysteine 105 to cysteine 116. An N-linked (GlcNAc...) asparagine glycan is attached at asparagine 127. Cystine bridges form between cysteine 134–cysteine 143, cysteine 274–cysteine 386, cysteine 298–cysteine 346, and cysteine 522–cysteine 540. The 119-residue stretch at proline 552 to asparagine 670 folds into the Ig-like C2-type domain. Asparagine 595 carries an N-linked (GlcNAc...) asparagine glycan. Cysteines 653 and 719 form a disulfide. The segment covering arginine 728–glutamate 754 has biased composition (basic residues). Residues arginine 728 to threonine 761 are disordered.

It belongs to the semaphorin family. Developing spinal cord and developing visual system. Collapsin-1, -2, -3, and -5 bind to overlapping but distinct axon tracts.

Its subcellular location is the secreted. Induces the collapse and paralysis of neuronal growth cones. Could potentially act as repulsive cues toward specific neuronal populations. Binds to neuropilin. The sequence is that of Semaphorin-3D (SEMA3D) from Gallus gallus (Chicken).